The primary structure comprises 33 residues: Mu/omega-theraphotoxin-Tap2a (33 aa).

3 disulfide bridges follow: Cys2-Cys17, Cys9-Cys22, and Cys16-Cys29.

The protein belongs to the neurotoxin 10 (Hwtx-1) family. 59 (Tltx) subfamily. As to expression, expressed by the venom gland.

It is found in the secreted. In terms of biological role, gating-modifier toxin that inhibits both sodium (Nav) and calcium (Cav3) channels by inducing hyperpolarizing shift in voltage-dependence of activation and steady state inactivation. Inhibits Nav1.1/SCN1A, Nav1.2/SCN2A, Nav1.6/SCN6A, Nav1.7/SCN9A and Cav3.1/CACNA1G sodium and calcium channels at nanomolar concentrations (IC(50)=169-621 nM). Surprisingly, selectively slows fast inactivation of Nav1.3/SCN3A. Also shows moderate inhibition of Nav1.3/SCN3A sodium channels (IC(50)=1216 nM). The protein is Mu/omega-theraphotoxin-Tap2a of Theraphosa apophysis (Goliath pinkfoot tarantula).